The primary structure comprises 347 residues: NADH-ubiquinone oxidoreductase chain 2 (347 aa).

A run of 11 helical transmembrane segments spans residues 3–23, 25–45, 59–79, 96–116, 127–147, 149–169, 178–198, 201–221, 239–259, 274–294, and 326–346; these read PMTF…VLLS, HWFM…PVLM, YFLT…INTM, ILIT…FWVP, GLIL…QIYP, LNTN…GWGG, IMAY…TYNP, SLLN…LLII, IVTT…PLTG, NSLI…FFYM, and TAPL…LITL.

The protein belongs to the complex I subunit 2 family. In terms of assembly, core subunit of respiratory chain NADH dehydrogenase (Complex I) which is composed of 45 different subunits. Interacts with TMEM242.

It is found in the mitochondrion inner membrane. The catalysed reaction is a ubiquinone + NADH + 5 H(+)(in) = a ubiquinol + NAD(+) + 4 H(+)(out). Core subunit of the mitochondrial membrane respiratory chain NADH dehydrogenase (Complex I) which catalyzes electron transfer from NADH through the respiratory chain, using ubiquinone as an electron acceptor. Essential for the catalytic activity and assembly of complex I. This chain is NADH-ubiquinone oxidoreductase chain 2, found in Sylvisorex ollula (Greater forest shrew).